Consider the following 96-residue polypeptide: Aspartyl/glutamyl-tRNA(Asn/Gln) amidotransferase subunit C (96 aa).

The protein belongs to the GatC family. Heterotrimer of A, B and C subunits.

The enzyme catalyses L-glutamyl-tRNA(Gln) + L-glutamine + ATP + H2O = L-glutaminyl-tRNA(Gln) + L-glutamate + ADP + phosphate + H(+). The catalysed reaction is L-aspartyl-tRNA(Asn) + L-glutamine + ATP + H2O = L-asparaginyl-tRNA(Asn) + L-glutamate + ADP + phosphate + 2 H(+). Allows the formation of correctly charged Asn-tRNA(Asn) or Gln-tRNA(Gln) through the transamidation of misacylated Asp-tRNA(Asn) or Glu-tRNA(Gln) in organisms which lack either or both of asparaginyl-tRNA or glutaminyl-tRNA synthetases. The reaction takes place in the presence of glutamine and ATP through an activated phospho-Asp-tRNA(Asn) or phospho-Glu-tRNA(Gln). The chain is Aspartyl/glutamyl-tRNA(Asn/Gln) amidotransferase subunit C from Chloroflexus aurantiacus (strain ATCC 29366 / DSM 635 / J-10-fl).